We begin with the raw amino-acid sequence, 1259 residues long: Protein flightless-1 homolog (1259 aa).

LRR repeat units lie at residues 7 to 32, 33 to 55, 56 to 78, 80 to 103, 104 to 126, 128 to 149, 150 to 173, 176 to 201, 222 to 245, 247 to 268, 269 to 291, 293 to 316, 317 to 339, 340 to 363, and 365 to 385; these read LPFI…VKSM, TSLR…LASL, QKLE…LSSL, NLRA…IFQL, DDLS…LENS, NMLV…LFIN, LTDL…MRRL, LQTL…VSLQ, LSNL…LYSL, NLKR…IDQW, TKLE…ICKL, KLKK…VGKL, SNLV…LCRC, GKLK…HFLT, and LEVL…PVDR. 4 Gelsolin-like repeats span residues 509–589, 628–702, 757–830, and 1170–1225; these read IPIQ…SEEF, NIRL…PEFW, DVVP…CQVF, and EKCS…RSKD.

As to expression, expressed in ventricular cardiomyocytes, where it particularly localizes to intercalated disks and costamere-like structures (at protein level).

The protein resides in the nucleus. It is found in the cytoplasm. It localises to the cytoskeleton. Its subcellular location is the microtubule organizing center. The protein localises to the centrosome. The protein resides in the cell junction. It is found in the focal adhesion. Functionally, is a regulator of actin polymerization, required for proper myofibril organization and the assembly of cardiomyocyte cell adhesion complexes. Is a regulator of the length of sarcomeric thin filaments. Regulates cytoskeletal rearrangements involved in cytokinesis and cell migration, by inhibiting Rac1-dependent paxillin phosphorylation. May play a role as coactivator in transcriptional activation by hormone-activated nuclear receptors (NR) and acts in cooperation with NCOA2 and CARM1. Involved in estrogen hormone signaling. The polypeptide is Protein flightless-1 homolog (Danio rerio (Zebrafish)).